Here is a 487-residue protein sequence, read N- to C-terminus: DNA ligase (487 aa).

Lys159 serves as the catalytic N6-AMP-lysine intermediate. 3 residues coordinate ATP: Arg164, Arg182, and Glu217. Glu217 serves as a coordination point for a divalent metal cation. Positions Glu229 to Ala237 are interaction with the sliding clamp. Residue Glu344 participates in a divalent metal cation binding. ATP contacts are provided by Arg359 and Lys365.

Belongs to the ATP-dependent DNA ligase family. As to quaternary structure, interacts with the sliding clamp. Requires a divalent metal cation as cofactor.

It carries out the reaction ATP + (deoxyribonucleotide)n-3'-hydroxyl + 5'-phospho-(deoxyribonucleotide)m = (deoxyribonucleotide)n+m + AMP + diphosphate.. Its function is as follows. DNA ligase, which is expressed in the early stage of lytic development, has been implicated in T4 DNA synthesis and genetic recombination. It may also play a role in T4 DNA repair. The chain is DNA ligase (30) from Escherichia coli (Bacteriophage T6).